Here is a 344-residue protein sequence, read N- to C-terminus: Phenylalanine--tRNA ligase alpha subunit (344 aa).

Glutamate 255 serves as a coordination point for Mg(2+).

Belongs to the class-II aminoacyl-tRNA synthetase family. Phe-tRNA synthetase alpha subunit type 1 subfamily. As to quaternary structure, tetramer of two alpha and two beta subunits. Mg(2+) is required as a cofactor.

The protein localises to the cytoplasm. The catalysed reaction is tRNA(Phe) + L-phenylalanine + ATP = L-phenylalanyl-tRNA(Phe) + AMP + diphosphate + H(+). This Cytophaga hutchinsonii (strain ATCC 33406 / DSM 1761 / CIP 103989 / NBRC 15051 / NCIMB 9469 / D465) protein is Phenylalanine--tRNA ligase alpha subunit.